Reading from the N-terminus, the 250-residue chain is 5-oxoprolinase subunit A (250 aa).

This sequence belongs to the LamB/PxpA family. In terms of assembly, forms a complex composed of PxpA, PxpB and PxpC.

The catalysed reaction is 5-oxo-L-proline + ATP + 2 H2O = L-glutamate + ADP + phosphate + H(+). Functionally, catalyzes the cleavage of 5-oxoproline to form L-glutamate coupled to the hydrolysis of ATP to ADP and inorganic phosphate. This Thermus thermophilus (strain ATCC BAA-163 / DSM 7039 / HB27) protein is 5-oxoprolinase subunit A.